A 249-amino-acid polypeptide reads, in one-letter code: 3-deoxy-D-manno-octulosonic acid kinase (249 aa).

Aspartate 175 is an active-site residue.

It belongs to the protein kinase superfamily. KdkA/RfaP family.

The protein localises to the cell inner membrane. The enzyme catalyses an alpha-Kdo-(2-&gt;6)-lipid IVA + ATP = a 4-O-phospho-alpha-Kdo-(2-&gt;6)-lipid IVA + ADP + H(+). It functions in the pathway bacterial outer membrane biogenesis; LPS core biosynthesis. Catalyzes the ATP-dependent phosphorylation of the 3-deoxy-D-manno-octulosonic acid (Kdo) residue in Kdo-lipid IV(A) at the 4-OH position. The chain is 3-deoxy-D-manno-octulosonic acid kinase from Xylella fastidiosa (strain M12).